A 1357-amino-acid chain; its full sequence is DNA-directed RNA polymerase subunit beta (1357 aa).

It belongs to the RNA polymerase beta chain family. As to quaternary structure, the RNAP catalytic core consists of 2 alpha, 1 beta, 1 beta' and 1 omega subunit. When a sigma factor is associated with the core the holoenzyme is formed, which can initiate transcription.

It catalyses the reaction RNA(n) + a ribonucleoside 5'-triphosphate = RNA(n+1) + diphosphate. DNA-dependent RNA polymerase catalyzes the transcription of DNA into RNA using the four ribonucleoside triphosphates as substrates. This chain is DNA-directed RNA polymerase subunit beta, found in Pseudomonas entomophila (strain L48).